An 884-amino-acid polypeptide reads, in one-letter code: Androgen receptor (884 aa).

The modulating stretch occupies residues 1–522 (MEVQLGLGRV…PIDYYFPPQK (522 aa)). An interaction with ZNF318 region spans residues 1–551 (MEVQLGLGRV…GSCKVFFKRA (551 aa)). Disordered stretches follow at residues 33–145 (VIQN…TLSL) and 174–207 (QQQQ…YLGG). Low complexity-rich tracts occupy residues 55–79 (QQQQ…PQAQ) and 174–196 (QQQQ…AAGA). A Phosphoserine; by CDK9 modification is found at Ser61. Residue Ser75 is modified to Phosphoserine. The segment covering 197 to 207 (PTSSKDSYLGG) has biased composition (polar residues). Position 204 is a phosphotyrosine; by CSK (Tyr204). Ser237 is subject to Phosphoserine. Tyr248 carries the post-translational modification Phosphotyrosine; by CSK and TNK2. Residues 275-294 (DDSADKGTEEPAEYTPFKGS) are disordered. Phosphotyrosine; by CSK is present on residues Tyr288, Tyr327, Tyr338, and Tyr343. Tyr344 is subject to Phosphotyrosine; by CSK and TNK2. Lys367 is covalently cross-linked (Glycyl lysine isopeptide (Lys-Gly) (interchain with G-Cter in SUMO)). Phosphotyrosine; by CSK is present on Tyr374. Residue Lys485 forms a Glycyl lysine isopeptide (Lys-Gly) (interchain with G-Cter in SUMO) linkage. A phosphotyrosine; by CSK mark is found at Tyr499 and Tyr516. The interval 516–883 (YYFPPQKTCL…GKVKPIYFHT (368 aa)) is interaction with LPXN. A DNA-binding region (nuclear receptor) is located at residues 523 to 596 (TCLICGDEAS…AGMTLGARKL (74 aa)). NR C4-type zinc fingers lie at residues 524-544 (CLIC…CGSC) and 560-584 (CASR…LRKC). Residues 536-626 (YGALTCGSCK…TEESSQKLTV (91 aa)) are interaction with HIPK3. Residues 556–883 (QKYLCASRND…GKVKPIYFHT (328 aa)) form an interaction with CCAR1 region. The segment at 589 to 883 (MTLGARKLKK…GKVKPIYFHT (295 aa)) is interaction with KAT7. Phosphoserine; by STK4/MST1 is present on Ser615. The NR LBD domain maps to 633 to 864 (ECQPIFLNVL…DFPEMMAEII (232 aa)). 17beta-hydroxy-5alpha-androstan-3-one contacts are provided by Asn670 and Arg717. Residues Lys810 and Lys812 each participate in a glycyl lysine isopeptide (Lys-Gly) (interchain with G-Cter in ubiquitin) cross-link. Thr842 is a 17beta-hydroxy-5alpha-androstan-3-one binding site. Tyr880 bears the Phosphotyrosine; by CSK mark.

The protein belongs to the nuclear hormone receptor family. NR3 subfamily. As to quaternary structure, binds DNA as a homodimer. Part of a ternary complex containing AR, EFCAB6/DJBP and PARK7. Interacts with HIPK3 and NR0B2 in the presence of androgen. The ligand binding domain interacts with KAT7/HBO1 in the presence of dihydrotestosterone. Interacts with EFCAB6/DJBP, PQBP1, RANBP9, RBAK, SPDEF, SRA1, TGFB1I1 and RREB1. Interacts with ZMIZ1/ZIMP10 and ZMIZ2/ZMIP7 which both enhance its transactivation activity. Interacts with SLC30A9 and RAD54L2/ARIP4. Interacts with MACROD1 (via macro domain). Interacts via the ligand-binding domain with LXXLL and FXXLF motifs from NCOA1, NCOA2, NCOA3 and MAGEA11. Interacts (via nuclear receptor DNA binding domain and nuclear receptor ligand binding domain) with NCOA4. The AR N-terminal poly-Gln region binds Ran resulting in enhancement of AR-mediated transactivation. Ran-binding decreases as the poly-Gln length increases. Interacts with HIP1 (via coiled coil domain). Interacts (via ligand-binding domain) with TRIM68. Interacts with TNK2. Interacts with USP26. Interacts with RNF6. Interacts (regulated by RNF6 probably through polyubiquitination) with RNF14; regulates AR transcriptional activity. Interacts with PRMT2 and TRIM24. Interacts with RACK1. Interacts with RANBP10; this interaction enhances dihydrotestosterone-induced AR transcriptional activity. Interacts with PRPF6 in a hormone-independent way; this interaction enhances dihydrotestosterone-induced AR transcriptional activity. Interacts with STK4/MST1. Interacts with ZIPK/DAPK3. Interacts with LPXN. Interacts with MAK. Part of a complex containing AR, MAK and NCOA3. Interacts with CRY1. Interacts with CCAR1 and GATA2. Interacts with ZNF318. Interacts with BUD31. Interacts with ARID4A. Interacts with ARID4B. Interacts (via NR LBD domain) with ZBTB7A; the interaction is direct and androgen-dependent. Interacts with NCOR1. Interacts with NCOR2. Interacts with CRY2 in a ligand-dependent manner. In terms of processing, phosphorylated in prostate cancer cells in response to several growth factors including EGF. Phosphorylation is induced by c-Src kinase (CSK). Tyr-499 is one of the major phosphorylation sites and an increase in phosphorylation and Src kinase activity is associated with prostate cancer progression. Phosphorylation by TNK2 enhances the DNA-binding and transcriptional activity. Phosphorylation at Ser-61 by CDK9 regulates AR promoter selectivity and cell growth. Post-translationally, sumoylated on Lys-367 (major) and Lys-485. Ubiquitinated. Deubiquitinated by USP26. 'Lys-6' and 'Lys-27'-linked polyubiquitination by RNF6 modulates AR transcriptional activity and specificity. Palmitoylated by ZDHHC7 and ZDHHC21. Palmitoylation is required for plasma membrane targeting and for rapid intracellular signaling via ERK and AKT kinases and cAMP generation.

It is found in the nucleus. It localises to the cytoplasm. Its function is as follows. Steroid hormone receptors are ligand-activated transcription factors that regulate eukaryotic gene expression and affect cellular proliferation and differentiation in target tissues. Transcription factor activity is modulated by bound coactivator and corepressor proteins like ZBTB7A that recruits NCOR1 and NCOR2 to the androgen response elements/ARE on target genes, negatively regulating androgen receptor signaling and androgen-induced cell proliferation. Transcription activation is also down-regulated by NR0B2. Activated, but not phosphorylated, by HIPK3 and ZIPK/DAPK3. The chain is Androgen receptor (AR) from Eulemur fulvus collaris (Collared brown lemur).